The primary structure comprises 737 residues: Propionyl-CoA carboxylase alpha chain, mitochondrial (737 aa).

The transit peptide at 1 to 61 (MAGLWVRTVA…QCLVVSRSLS (61 aa)) directs the protein to the mitochondrion. The Biotin carboxylation domain maps to 71–518 (TFDKILIANR…STKFLSDVYP (448 aa)). At Lys-74 the chain carries N6-acetyllysine; alternate. Lys-74 is subject to N6-succinyllysine; alternate. Lys-128 is modified (N6-succinyllysine). Lys-159 bears the N6-acetyllysine; alternate mark. Lys-159 carries the N6-succinyllysine; alternate modification. Lys-163 is subject to N6-acetyllysine. Residue Lys-186 coordinates ATP. In terms of domain architecture, ATP-grasp spans 190-387 (KLLAKRAKVN…LVQEMILVAK (198 aa)). Lys-197 is subject to N6-succinyllysine. Lys-209 bears the N6-acetyllysine; alternate mark. Lys-209 bears the N6-succinyllysine; alternate mark. Residues 218 to 279 (AREI…PRHI), Glu-270, and Asn-305 contribute to the ATP site. At Ser-261 the chain carries Phosphoserine. Position 271 is an N6-succinyllysine (Lys-271). Lys-337 bears the N6-acetyllysine; alternate mark. N6-succinyllysine; alternate is present on Lys-337. 3 residues coordinate Mg(2+): Glu-345, Glu-358, and Asn-360. Positions 345, 358, and 360 each coordinate Mn(2+). Residue Arg-362 is part of the active site. 2 positions are modified to N6-succinyllysine: Lys-394 and Lys-416. Position 418 (Phe-418) interacts with biotin. An N6-acetyllysine modification is found at Lys-505. Lys-511, Lys-522, Lys-567, and Lys-657 each carry N6-succinyllysine. The 80-residue stretch at 658–737 (FMLEKVPKDT…GEGDLLVELE (80 aa)) folds into the Biotinyl-binding domain. Lys-703 carries the N6-biotinyllysine; by HLCS modification.

In terms of assembly, the holoenzyme is a dodecamer composed of 6 PCCA/alpha subunits and 6 PCCB/beta subunits. Interacts (via the biotin carboxylation domain) with SIRT4. Interacts with SIRT3 and SIRT5. It depends on biotin as a cofactor. Requires Mg(2+) as cofactor. Mn(2+) serves as cofactor. Post-translationally, acetylated. The biotin cofactor is covalently attached to the C-terminal biotinyl-binding domain and is required for the catalytic activity. Biotinylation is catalyzed by HLCS.

It is found in the mitochondrion matrix. It carries out the reaction propanoyl-CoA + hydrogencarbonate + ATP = (S)-methylmalonyl-CoA + ADP + phosphate + H(+). The catalysed reaction is butanoyl-CoA + hydrogencarbonate + ATP = (2S)-ethylmalonyl-CoA + ADP + phosphate + H(+). Its pathway is metabolic intermediate metabolism; propanoyl-CoA degradation; succinyl-CoA from propanoyl-CoA: step 1/3. This is one of the 2 subunits of the biotin-dependent propionyl-CoA carboxylase (PCC), a mitochondrial enzyme involved in the catabolism of odd chain fatty acids, branched-chain amino acids isoleucine, threonine, methionine, and valine and other metabolites. Propionyl-CoA carboxylase catalyzes the carboxylation of propionyl-CoA/propanoyl-CoA to D-methylmalonyl-CoA/(S)-methylmalonyl-CoA. Within the holoenzyme, the alpha subunit catalyzes the ATP-dependent carboxylation of the biotin carried by the biotin carboxyl carrier (BCC) domain, while the beta subunit then transfers the carboxyl group from carboxylated biotin to propionyl-CoA. Propionyl-CoA carboxylase also significantly acts on butyryl-CoA/butanoyl-CoA, which is converted to ethylmalonyl-CoA/(2S)-ethylmalonyl-CoA. Other alternative minor substrates include (2E)-butenoyl-CoA/crotonoyl-CoA. The sequence is that of Propionyl-CoA carboxylase alpha chain, mitochondrial from Rattus norvegicus (Rat).